The primary structure comprises 420 residues: Gamma-glutamyl phosphate reductase (420 aa).

This sequence belongs to the gamma-glutamyl phosphate reductase family.

The protein localises to the cytoplasm. The catalysed reaction is L-glutamate 5-semialdehyde + phosphate + NADP(+) = L-glutamyl 5-phosphate + NADPH + H(+). Its pathway is amino-acid biosynthesis; L-proline biosynthesis; L-glutamate 5-semialdehyde from L-glutamate: step 2/2. Catalyzes the NADPH-dependent reduction of L-glutamate 5-phosphate into L-glutamate 5-semialdehyde and phosphate. The product spontaneously undergoes cyclization to form 1-pyrroline-5-carboxylate. The polypeptide is Gamma-glutamyl phosphate reductase (Oenococcus oeni (strain ATCC BAA-331 / PSU-1)).